A 76-amino-acid chain; its full sequence is Large ribosomal subunit protein uL30 (76 aa).

Belongs to the universal ribosomal protein uL30 family. In terms of assembly, part of the 50S ribosomal subunit.

This chain is Large ribosomal subunit protein uL30, found in Anaeromyxobacter dehalogenans (strain 2CP-1 / ATCC BAA-258).